Reading from the N-terminus, the 328-residue chain is Cytosolic Fe-S cluster assembly factor NBP35 (328 aa).

Residues cysteine 27, cysteine 41, cysteine 44, and cysteine 50 each coordinate [4Fe-4S] cluster. Glycine 80–serine 87 is an ATP binding site. Positions 253 and 256 each coordinate [4Fe-4S] cluster.

It belongs to the Mrp/NBP35 ATP-binding proteins family. NUBP1/NBP35 subfamily. Heterotetramer of 2 NBP35 and 2 CFD1 chains. It depends on [4Fe-4S] cluster as a cofactor.

It localises to the cytoplasm. The protein resides in the nucleus. Component of the cytosolic iron-sulfur (Fe/S) protein assembly (CIA) machinery. Required for maturation of extramitochondrial Fe-S proteins. The NBP35-CFD1 heterotetramer forms a Fe-S scaffold complex, mediating the de novo assembly of an Fe-S cluster and its transfer to target apoproteins. Required for biogenesis and export of both ribosomal subunits, which may reflect a role in assembly of the Fe/S clusters in RLI1, a protein which performs rRNA processing and ribosome export. This is Cytosolic Fe-S cluster assembly factor NBP35 from Saccharomyces cerevisiae (strain ATCC 204508 / S288c) (Baker's yeast).